A 150-amino-acid polypeptide reads, in one-letter code: Macrodomain Ter protein (150 aa).

This sequence belongs to the MatP family. Homodimer.

The protein localises to the cytoplasm. Required for spatial organization of the terminus region of the chromosome (Ter macrodomain) during the cell cycle. Prevents early segregation of duplicated Ter macrodomains during cell division. Binds specifically to matS, which is a 13 bp signature motif repeated within the Ter macrodomain. The protein is Macrodomain Ter protein of Shigella boydii serotype 18 (strain CDC 3083-94 / BS512).